The following is a 120-amino-acid chain: MAKYRAGRINEEVKKEVSSIIHNDIKDPRLSAMVSVTDVDVTKDLKYAKVYVSIFGNEKAKEESLQALKSSVGFIRKEIGRRVKLRNTPEVIIEVDNSIERGMHIDELLHSIKENKSNDN.

It belongs to the RbfA family. Monomer. Binds 30S ribosomal subunits, but not 50S ribosomal subunits or 70S ribosomes.

It localises to the cytoplasm. One of several proteins that assist in the late maturation steps of the functional core of the 30S ribosomal subunit. Associates with free 30S ribosomal subunits (but not with 30S subunits that are part of 70S ribosomes or polysomes). Required for efficient processing of 16S rRNA. May interact with the 5'-terminal helix region of 16S rRNA. In Clostridium botulinum (strain Loch Maree / Type A3), this protein is Ribosome-binding factor A.